The sequence spans 186 residues: Transcription factor FapR (186 aa).

The region spanning 98–168 (FTKTQIARGH…YVIEVNSYVR (71 aa)) is the MaoC-like domain.

The protein belongs to the FapR family.

Functionally, transcriptional factor involved in regulation of membrane lipid biosynthesis by repressing genes involved in fatty acid and phospholipid metabolism. The chain is Transcription factor FapR from Staphylococcus haemolyticus (strain JCSC1435).